Consider the following 370-residue polypeptide: Coiled-coil domain-containing protein 89 (370 aa).

The segment at methionine 1–leucine 38 is disordered. The residue at position 12 (threonine 12) is a Phosphothreonine. Residues proline 18–leucine 38 are compositionally biased toward basic and acidic residues. Residues leucine 19–alanine 346 are a coiled coil.

The protein belongs to the CCDC89 family. As to quaternary structure, interacts with HEY1.

It is found in the cytoplasm. The protein localises to the nucleus. This Bos taurus (Bovine) protein is Coiled-coil domain-containing protein 89.